The primary structure comprises 246 residues: Acetoacetate decarboxylase (246 aa).

The active-site Schiff-base intermediate with acetoacetate is the K116.

The protein belongs to the ADC family.

The catalysed reaction is acetoacetate + H(+) = acetone + CO2. Catalyzes the conversion of acetoacetate to acetone and carbon dioxide. The protein is Acetoacetate decarboxylase of Burkholderia cenocepacia (strain HI2424).